We begin with the raw amino-acid sequence, 258 residues long: MASTDNSRALTLLPAVDVADGQAVRLVQGAAGTETSYGAPIEAALAWQNAGAEWIHLVDLDAAFGRGSNFELLKEVTGQLDVNVELSGGIRDDESLERALSTGCRRVNIGTAALEDPEWCESVISRYGDKVAIGLDTREVDGEWRLRGRGWTSDGGELWEVLERLDSQGVSRLVVTDVSRDGMLNGPNIDLLREVAAATDAPVVASGGISSLDDIRALAAVVHEGVDSAIVGKALYAGKFTLEEALEAAQGVARGSDI.

D17 functions as the Proton acceptor in the catalytic mechanism. D136 functions as the Proton donor in the catalytic mechanism.

The protein belongs to the HisA/HisF family.

It localises to the cytoplasm. The enzyme catalyses 1-(5-phospho-beta-D-ribosyl)-5-[(5-phospho-beta-D-ribosylamino)methylideneamino]imidazole-4-carboxamide = 5-[(5-phospho-1-deoxy-D-ribulos-1-ylimino)methylamino]-1-(5-phospho-beta-D-ribosyl)imidazole-4-carboxamide. It participates in amino-acid biosynthesis; L-histidine biosynthesis; L-histidine from 5-phospho-alpha-D-ribose 1-diphosphate: step 4/9. The polypeptide is 1-(5-phosphoribosyl)-5-[(5-phosphoribosylamino)methylideneamino] imidazole-4-carboxamide isomerase (Corynebacterium jeikeium (strain K411)).